Reading from the N-terminus, the 412-residue chain is D-xylonate dehydratase (412 aa).

In terms of assembly, homooctamer.

It catalyses the reaction D-xylonate = 2-dehydro-3-deoxy-D-arabinonate + H2O. In terms of biological role, NADP-dependent D-xylose dehydrogenase involved in the degradation of D-xylose, a major component of hemicelluloses such as xylan. Catalyzes the third reaction in the xylose utilization pathway through dehydratation of D-xylonate into 2-dehydro-3-deoxy-D-xylonate. The chain is D-xylonate dehydratase from Haloferax volcanii (strain ATCC 29605 / DSM 3757 / JCM 8879 / NBRC 14742 / NCIMB 2012 / VKM B-1768 / DS2) (Halobacterium volcanii).